The following is a 621-amino-acid chain: tRNA uridine 5-carboxymethylaminomethyl modification enzyme MnmG (621 aa).

11 to 16 contributes to the FAD binding site; it reads GAGHAG. 271-285 is an NAD(+) binding site; the sequence is GPRYCPSVEDKINRF.

The protein belongs to the MnmG family. As to quaternary structure, homodimer. Heterotetramer of two MnmE and two MnmG subunits. FAD serves as cofactor.

It is found in the cytoplasm. NAD-binding protein involved in the addition of a carboxymethylaminomethyl (cmnm) group at the wobble position (U34) of certain tRNAs, forming tRNA-cmnm(5)s(2)U34. The sequence is that of tRNA uridine 5-carboxymethylaminomethyl modification enzyme MnmG from Cytophaga hutchinsonii (strain ATCC 33406 / DSM 1761 / CIP 103989 / NBRC 15051 / NCIMB 9469 / D465).